The following is a 365-amino-acid chain: 3-dehydroquinate synthase (365 aa).

NAD(+) is bound by residues 75-80 (DAENGK), 109-113 (GAATD), 133-134 (TT), Lys146, and Lys155. Zn(2+) contacts are provided by Glu188, His253, and His269.

The protein belongs to the sugar phosphate cyclases superfamily. Dehydroquinate synthase family. Co(2+) is required as a cofactor. The cofactor is Zn(2+). It depends on NAD(+) as a cofactor.

It is found in the cytoplasm. The catalysed reaction is 7-phospho-2-dehydro-3-deoxy-D-arabino-heptonate = 3-dehydroquinate + phosphate. The protein operates within metabolic intermediate biosynthesis; chorismate biosynthesis; chorismate from D-erythrose 4-phosphate and phosphoenolpyruvate: step 2/7. In terms of biological role, catalyzes the conversion of 3-deoxy-D-arabino-heptulosonate 7-phosphate (DAHP) to dehydroquinate (DHQ). In Corynebacterium glutamicum (strain R), this protein is 3-dehydroquinate synthase.